A 99-amino-acid polypeptide reads, in one-letter code: Large ribosomal subunit protein bL27 (99 aa).

Residues 1 to 9 (MLIMNLQLF) constitute a propeptide that is removed on maturation.

This sequence belongs to the bacterial ribosomal protein bL27 family. The N-terminus is cleaved by ribosomal processing cysteine protease Prp.

In Clostridium botulinum (strain Alaska E43 / Type E3), this protein is Large ribosomal subunit protein bL27.